Here is an 88-residue protein sequence, read N- to C-terminus: Large ribosomal subunit protein eL37 (88 aa).

Residues cysteine 19, cysteine 22, cysteine 34, and cysteine 37 each coordinate Zn(2+). The C4-type zinc finger occupies 19-37 (CNRCGKRSFHVQKKTCASC).

The protein belongs to the eukaryotic ribosomal protein eL37 family. Zn(2+) serves as cofactor.

In terms of biological role, binds to the 23S rRNA. The polypeptide is Large ribosomal subunit protein eL37 (RPL37) (Debaryomyces hansenii (strain ATCC 36239 / CBS 767 / BCRC 21394 / JCM 1990 / NBRC 0083 / IGC 2968) (Yeast)).